The following is a 232-amino-acid chain: MQNIFLAATLLGAAFAAPQNPPTSCSAAPQPTGTGSPGTVCGSTTFTNYTVKAGDTLGAIAKQYNSGVCDIAKVNGIDNPDYIKPDQVLSIPANCVTPDNTSCVKPVPVITNTCVLGVGSTYTVKSGDSFSAIATSFNITLASLEARNPQIPNYDLIFPGQVINTPLCPNSVCDSIGTYVIESGDIFYNLAQSNNVTVGQLESLNVNVNVTDIHPGDIIILPHNCHNITASA.

The signal sequence occupies residues 1-16 (MQNIFLAATLLGAAFA). Positions 47-91 (TNYTVKAGDTLGAIAKQYNSGVCDIAKVNGIDNPDYIKPDQVLSI) constitute a LysM 1 domain. N-linked (GlcNAc...) asparagine glycans are attached at residues asparagine 48, asparagine 100, asparagine 138, asparagine 195, asparagine 209, and asparagine 227. LysM domains lie at 120–165 (STYT…VINT) and 177–221 (GTYV…IIIL).

It belongs to the secreted LysM effector family.

Functionally, secreted effector that enables the plant pathogenic fungus to manipulate host defenses for successful infection. Binds chitin fragments and blocks the activation of chitin-induced plant defense responses. Protects fungal hyphae against hydrolytic plant enzymes. The sequence is that of Secreted LysM effector Mg3LysM from Zymoseptoria tritici (strain CBS 115943 / IPO323) (Speckled leaf blotch fungus).